The chain runs to 333 residues: Flap endonuclease 1 (333 aa).

Residues 1–99 form an N-domain region; that stretch reads MGVALRDILA…ETNAERKKLR (99 aa). The Mg(2+) site is built by Asp28, Asp81, Glu153, Glu155, Asp174, Asp176, and Asp235. Positions 117–256 are I-domain; the sequence is EAYRQARSAT…TALKIVKSGG (140 aa). The segment at 325-333 is interaction with PCNA; sequence GQKTLESFF.

The protein belongs to the XPG/RAD2 endonuclease family. FEN1 subfamily. In terms of assembly, interacts with PCNA. PCNA stimulates the nuclease activity without altering cleavage specificity. Mg(2+) is required as a cofactor.

In terms of biological role, structure-specific nuclease with 5'-flap endonuclease and 5'-3' exonuclease activities involved in DNA replication and repair. During DNA replication, cleaves the 5'-overhanging flap structure that is generated by displacement synthesis when DNA polymerase encounters the 5'-end of a downstream Okazaki fragment. Binds the unpaired 3'-DNA end and kinks the DNA to facilitate 5' cleavage specificity. Cleaves one nucleotide into the double-stranded DNA from the junction in flap DNA, leaving a nick for ligation. Also involved in the base excision repair (BER) pathway. Acts as a genome stabilization factor that prevents flaps from equilibrating into structures that lead to duplications and deletions. Also possesses 5'-3' exonuclease activity on nicked or gapped double-stranded DNA. This chain is Flap endonuclease 1, found in Methanoregula boonei (strain DSM 21154 / JCM 14090 / 6A8).